Consider the following 380-residue polypeptide: MSDSPIKYRLIKKEKHTGARLGEIITPHGTFPTPMFMPVGTQATVKTQSPEELKEMGSGIILSNTYHLWLRPGDELIARAGGLHKFMNWDQPILTDSGGFQVYSLADSRNITEEGVTFKNHLNGSKMLLSPEKAISIQNNLGSDIMMSFDECPQFYQPYDYVKKSIERTSRWAERGLKAHRRPHDQGLFGIVQGAGFEDLRRQSAHDLVSMDFSGYSIGGLAVGETHEEMNAVLDFTTQLLPENKPRYLMGVGAPDSLIDGVIRGVDMFDCVLPTRIARNGTCMTSQGRLVVKNAQFAEDFTPLDPECDCYTCNNYTRAYLRHLLKADETFGIRLTSYHNLYFLLNLMKQVRQAIMDDNLLEFRKYFVEKYGYNKSGRNF.

The active-site Proton acceptor is Asp96. Residues 96-100, Asp150, Gln193, and Gly220 each bind substrate; that span reads DSGGF. Residues 251–257 are RNA binding; the sequence is GVGAPDS. Catalysis depends on Asp270, which acts as the Nucleophile. The tract at residues 275-279 is RNA binding; important for wobble base 34 recognition; it reads TRIAR. Residues Cys308, Cys310, Cys313, and His339 each contribute to the Zn(2+) site.

Belongs to the queuine tRNA-ribosyltransferase family. In terms of assembly, homodimer. Within each dimer, one monomer is responsible for RNA recognition and catalysis, while the other monomer binds to the replacement base PreQ1. Requires Zn(2+) as cofactor.

The catalysed reaction is 7-aminomethyl-7-carbaguanine + guanosine(34) in tRNA = 7-aminomethyl-7-carbaguanosine(34) in tRNA + guanine. The protein operates within tRNA modification; tRNA-queuosine biosynthesis. Catalyzes the base-exchange of a guanine (G) residue with the queuine precursor 7-aminomethyl-7-deazaguanine (PreQ1) at position 34 (anticodon wobble position) in tRNAs with GU(N) anticodons (tRNA-Asp, -Asn, -His and -Tyr). Catalysis occurs through a double-displacement mechanism. The nucleophile active site attacks the C1' of nucleotide 34 to detach the guanine base from the RNA, forming a covalent enzyme-RNA intermediate. The proton acceptor active site deprotonates the incoming PreQ1, allowing a nucleophilic attack on the C1' of the ribose to form the product. After dissociation, two additional enzymatic reactions on the tRNA convert PreQ1 to queuine (Q), resulting in the hypermodified nucleoside queuosine (7-(((4,5-cis-dihydroxy-2-cyclopenten-1-yl)amino)methyl)-7-deazaguanosine). The chain is Queuine tRNA-ribosyltransferase from Streptococcus pneumoniae (strain P1031).